A 476-amino-acid chain; its full sequence is Aspartyl/glutamyl-tRNA(Asn/Gln) amidotransferase subunit B (476 aa).

The protein belongs to the GatB/GatE family. GatB subfamily. In terms of assembly, heterotrimer of A, B and C subunits.

It carries out the reaction L-glutamyl-tRNA(Gln) + L-glutamine + ATP + H2O = L-glutaminyl-tRNA(Gln) + L-glutamate + ADP + phosphate + H(+). The enzyme catalyses L-aspartyl-tRNA(Asn) + L-glutamine + ATP + H2O = L-asparaginyl-tRNA(Asn) + L-glutamate + ADP + phosphate + 2 H(+). Its function is as follows. Allows the formation of correctly charged Asn-tRNA(Asn) or Gln-tRNA(Gln) through the transamidation of misacylated Asp-tRNA(Asn) or Glu-tRNA(Gln) in organisms which lack either or both of asparaginyl-tRNA or glutaminyl-tRNA synthetases. The reaction takes place in the presence of glutamine and ATP through an activated phospho-Asp-tRNA(Asn) or phospho-Glu-tRNA(Gln). The chain is Aspartyl/glutamyl-tRNA(Asn/Gln) amidotransferase subunit B from Lacticaseibacillus casei (strain BL23) (Lactobacillus casei).